A 222-amino-acid polypeptide reads, in one-letter code: Peroxisomal membrane protein 11-4 (222 aa).

The Cytoplasmic portion of the chain corresponds to 1–81; it reads MSAGDTLDKL…LNGLRRAPGE (81 aa). The helical transmembrane segment at 82–102 threads the bilayer; it reads FGALAVLANAGEMVYFFFDHF. The Lumenal portion of the chain corresponds to 103–196; it reads TWLSRVGVLD…IGIADIEPNP (94 aa). Residues 197–217 form a helical membrane-spanning segment; that stretch reads FCNHAVTLGISGLVSAWAGWY. Over 218–222 the chain is Cytoplasmic; sequence RNWPS.

The protein belongs to the peroxin-11 family. Expressed in seedlings, shoots, leaf sheaths and flag leaf.

It localises to the peroxisome membrane. Its function is as follows. Involved in peroxisomal proliferation. The polypeptide is Peroxisomal membrane protein 11-4 (PEX11-4) (Oryza sativa subsp. indica (Rice)).